The chain runs to 122 residues: Large ribosomal subunit protein eL18 (122 aa).

This sequence belongs to the eukaryotic ribosomal protein eL18 family.

The polypeptide is Large ribosomal subunit protein eL18 (Thermoplasma volcanium (strain ATCC 51530 / DSM 4299 / JCM 9571 / NBRC 15438 / GSS1)).